Here is a 722-residue protein sequence, read N- to C-terminus: Fatty acid oxidation complex subunit alpha (722 aa).

Positions 1-189 are enoyl-CoA hydratase/isomerase; sequence MIYQGKSLSA…AQGAIDAVVE (189 aa). Residue Asp-296 coordinates substrate. A 3-hydroxyacyl-CoA dehydrogenase region spans residues 311–722; that stretch reads TKAVNKAAVL…SYFTTDVKLA (412 aa). Residues Met-325, Asp-344, 401 to 403, Lys-408, and Ser-430 each bind NAD(+); that span reads VVE. Residue His-451 is the For 3-hydroxyacyl-CoA dehydrogenase activity of the active site. Position 454 (Asn-454) interacts with NAD(+). Substrate is bound by residues Asn-501 and Tyr-661.

It in the N-terminal section; belongs to the enoyl-CoA hydratase/isomerase family. This sequence in the C-terminal section; belongs to the 3-hydroxyacyl-CoA dehydrogenase family. In terms of assembly, heterotetramer of two alpha chains (FadB) and two beta chains (FadA).

The catalysed reaction is a (3S)-3-hydroxyacyl-CoA + NAD(+) = a 3-oxoacyl-CoA + NADH + H(+). It catalyses the reaction a (3S)-3-hydroxyacyl-CoA = a (2E)-enoyl-CoA + H2O. The enzyme catalyses a 4-saturated-(3S)-3-hydroxyacyl-CoA = a (3E)-enoyl-CoA + H2O. It carries out the reaction (3S)-3-hydroxybutanoyl-CoA = (3R)-3-hydroxybutanoyl-CoA. The catalysed reaction is a (3Z)-enoyl-CoA = a 4-saturated (2E)-enoyl-CoA. It catalyses the reaction a (3E)-enoyl-CoA = a 4-saturated (2E)-enoyl-CoA. It participates in lipid metabolism; fatty acid beta-oxidation. Its function is as follows. Involved in the aerobic and anaerobic degradation of long-chain fatty acids via beta-oxidation cycle. Catalyzes the formation of 3-oxoacyl-CoA from enoyl-CoA via L-3-hydroxyacyl-CoA. It can also use D-3-hydroxyacyl-CoA and cis-3-enoyl-CoA as substrate. This is Fatty acid oxidation complex subunit alpha from Colwellia psychrerythraea (strain 34H / ATCC BAA-681) (Vibrio psychroerythus).